The chain runs to 1171 residues: ATP-dependent helicase/deoxyribonuclease subunit B (1171 aa).

This sequence belongs to the helicase family. AddB/RexB type 2 subfamily. As to quaternary structure, heterodimer of AddA and RexB. Mg(2+) is required as a cofactor.

In terms of biological role, the heterodimer acts as both an ATP-dependent DNA helicase and an ATP-dependent, dual-direction single-stranded exonuclease. Recognizes the chi site generating a DNA molecule suitable for the initiation of homologous recombination. This subunit has 5' -&gt; 3' nuclease activity but not helicase activity. The chain is ATP-dependent helicase/deoxyribonuclease subunit B from Leuconostoc citreum (strain KM20).